A 266-amino-acid polypeptide reads, in one-letter code: Glutathione S-transferase AN1595 (266 aa).

The GST N-terminal domain maps to 43–123 (SFGKLYTYKR…HVTNEDSTTT (81 aa)). Lys93, Glu107, Cys108, and Asn143 together coordinate glutathione. A substrate-binding site is contributed by Lys93. The GST C-terminal domain maps to 128–259 (SSLDFVQIIR…VEEGLPNAPP (132 aa)).

It belongs to the GST superfamily.

It participates in secondary metabolite biosynthesis; terpenoid biosynthesis. Its function is as follows. Glutathione S-transferase; part of the gene cluster that mediates the biosynthesis of the diterpene ent-pimara-8(14),15-diene (PD). Within the cluster, the HMG-CoA reductase AN1593 functions in the mevalonate pathway, which produces isoprenoid precursors. The geranylgeranyl pyrophosphate (GGPP) synthase AN1592 is needed in the formation of GGPP, the precursor for diterpenes. Lastly, the pimaradiene synthase pbcA performs the 2 cyclization steps that convert GGPP to ent-pimara-8(14),15-diene. The putative roles of the remaining cluster enzymes in ent-pimara-8(14),15-diene biosynthesis is unclear. The cytochrome P450 monooxygenase AN1598, the glutathione S-transferase AN1595, the oxidoreductases AN1596 and AN1597 probably function as decorative enzymes. It is possible that in biological conditions the compound is oxidized to ent-pimara-8(14),15-dien-19-oic acid, which is a bioactive diterpene compound predominant in many plant extracts. The chain is Glutathione S-transferase AN1595 from Emericella nidulans (strain FGSC A4 / ATCC 38163 / CBS 112.46 / NRRL 194 / M139) (Aspergillus nidulans).